The chain runs to 797 residues: MVARFVPSAMTVLVARRGLAMASTRRGWRGLAVNLKPAAGRQWRQAYSTTPVRQNALHSEIEAQAASPFAAPGTRVQNPQTLTEKIVQRYAIGLPPGKKVKAGDYVTISPAQCMTHDNSWPVVTKFTSIGATKIHNNRQVVVTLDHDVQNTSESNLKKYKNIENFARQHGVDFYPAGRGIGHQIMIEEGYAWPGTLTVASDSHSNMYGGVAALGTPVVRTDAASIWATGQTWWQIPPIAKVTFTGVLPRGVTGKDVIIALCALFNQDEVLNHAIEFTGSDLTLSSLPIDDRLTISNMTTEWGAVAGIFPIDSTLKSWLRAKATVSAMLNPDLGGKARITHDKIEELFRDPPKPDLGATYAKSLYLNLSTLSPFVAGPNSVKVATPVKDLEAQNIKINKAYLVSCTNSRASDIAAAANVFREAANGGPIPKVAPGVEFYISAASLPEQEIAEQAGDWRVLLDAGCIENPASCNACIGLGRGLLQPGDVGISASNRNWNGRMGSPQAKAYLASPEVVAASALKGEIAGPGWYEKPEGVEKVIIGEGTGDLEADRAVSIADALESLVAQAESMISSAEKSLESSPAAATGAVGNAMADATADQAGEEGLIDILPGFPEKVSGEIVFCDSDNINTDGIYPGKYTYQDDITRDTMAQVVMENYDRSFASLAKPGDILVAGFNFGCGSSREQAATAILAKGIPLVVAGSFGNIFSRNSINNALMGVEVPRLVKRLREEFGEKVPTRRTGWRFEWDVRRSKVTVTEGEGGETWSQKVGDLPPNVQEIIAVGGLEKWVKHRISQA.

The transit peptide at 1–47 directs the protein to the mitochondrion; sequence MVARFVPSAMTVLVARRGLAMASTRRGWRGLAVNLKPAAGRQWRQAY. Residues cysteine 404, cysteine 471, and cysteine 474 each contribute to the [4Fe-4S] cluster site.

The protein belongs to the aconitase/IPM isomerase family. The cofactor is [4Fe-4S] cluster.

It is found in the mitochondrion. It catalyses the reaction (2R,3S)-homoisocitrate = cis-homoaconitate + H2O. The protein operates within amino-acid biosynthesis; L-lysine biosynthesis via AAA pathway; L-alpha-aminoadipate from 2-oxoglutarate: step 3/5. Catalyzes the reversible hydration of cis-homoaconitate to (2R,3S)-homoisocitrate, a step in the alpha-aminoadipate pathway for lysine biosynthesis. The chain is Homoaconitase, mitochondrial (LYS4) from Chaetomium globosum (strain ATCC 6205 / CBS 148.51 / DSM 1962 / NBRC 6347 / NRRL 1970) (Soil fungus).